The chain runs to 473 residues: Lipid A galacturonosyltransferase RgtD (473 aa).

Transmembrane regions (helical) follow at residues 6 to 26 (GLLI…FDAT), 68 to 88 (AIYW…LVLM), 94 to 114 (FVGP…PGVA), 118 to 138 (VFFS…LAYF), 160 to 180 (FLTK…LLLI), 190 to 210 (VIIA…WNLQ), 238 to 258 (FFAA…LWAV), 271 to 291 (KMLV…ATVA), 295 to 315 (ANWA…LLYL), and 327 to 347 (INGI…QLLL).

It is found in the cell membrane. The protein operates within bacterial outer membrane biogenesis; LPS lipid A biosynthesis. Functionally, involved in the modification of the lipopolysaccharide (LPS) lipid A moiety. Catalyzes the transfer of a galacturonic acid (GalA) residue to the 4'-position of 4'-dephosphorylated lipid A, using dodecaprenyl phosphate-GalA as the donor substrate. Acts before the other GalA transferases RgtA, RgtB and RgtC. This is Lipid A galacturonosyltransferase RgtD from Rhizobium johnstonii (strain DSM 114642 / LMG 32736 / 3841) (Rhizobium leguminosarum bv. viciae).